The sequence spans 183 residues: SAYSvFN domain-containing protein 1 (183 aa).

The Cytoplasmic portion of the chain corresponds to 1–105 (MEQRLAEFRA…SFLTNITFLK (105 aa)). Positions 11 to 36 (ARKRAGLAAQPPAASQGAQTPGEKAE) are disordered. The span at 16-36 (GLAAQPPAASQGAQTPGEKAE) shows a compositional bias: low complexity. The middle helical (MH) stretch occupies residues 91–105 (SCWDQSFLTNITFLK). An intramembrane region (helical) is located at residues 106–126 (VLLWLVLLGLFVELEFGLAYF). Residues 127–183 (VLSLFYWMYVGTRGPEEKKEGEKSAYSVFNPGCEAIQGTLTAEQLERELQLRPLAGR) are Cytoplasmic-facing.

Belongs to the SAYSD1 family. Associates (via N-terminus) with ribosomes.

The protein localises to the endoplasmic reticulum membrane. The protein resides in the cytoplasmic vesicle membrane. Its function is as follows. Ufmylation 'reader' component of a translocation-associated quality control pathway, a mechanism that takes place when a ribosome has stalled during translation, and which is required to degrade clogged substrates. Specifically recognizes and binds ufmylated ribosomes when a ribosome has stalled, promoting the transport of stalled nascent chain via the TRAPP complex to lysosomes for degradation. The sequence is that of SAYSvFN domain-containing protein 1 from Homo sapiens (Human).